Consider the following 314-residue polypeptide: MTTATPSSPSTAPLPTRRAMFVHAHPDDEVISTGIALASYAASPDTHVTLVTCTLGEEGEVLVPELIHLRADRGDQLGGYRIGELAGACAALGITDQRFLGGPGRWRDSGMIGTPANDHPRCLWRADLDEAAAELVRIVREVRPQVLVSYDARGGYGHPDHIRAHELTRRAFTDAADPSFAPQAGSVWQVAKRYETALARSSAVAGFEYFRDSAAESNPFAGLTSVDELGVTLVDDADITTELSAPHFFEAKIAAMRSHRTQMSVDGFFFALADGIGQRAWSVEHFVLAEGARGPGDGPDGRERDLFAGLVCEP.

The Zn(2+) site is built by H25, D28, and H161.

Belongs to the MshB deacetylase family. It depends on Zn(2+) as a cofactor.

It carries out the reaction 1D-myo-inositol 2-acetamido-2-deoxy-alpha-D-glucopyranoside + H2O = 1D-myo-inositol 2-amino-2-deoxy-alpha-D-glucopyranoside + acetate. Catalyzes the deacetylation of 1D-myo-inositol 2-acetamido-2-deoxy-alpha-D-glucopyranoside (GlcNAc-Ins) in the mycothiol biosynthesis pathway. The protein is 1D-myo-inositol 2-acetamido-2-deoxy-alpha-D-glucopyranoside deacetylase 2 of Frankia casuarinae (strain DSM 45818 / CECT 9043 / HFP020203 / CcI3).